The primary structure comprises 413 residues: Divalent metal cation transporter MntH (413 aa).

11 helical membrane passes run 19-39 (LALMGPAFVAAIGYIDPGNFA), 46-66 (ASFGYQLLWVVVWANLMAMLI), 94-114 (VWFYWVQAEIIAMATDLAEFI), 122-142 (LVLGVSLLQGAVLTGVATFLI), 156-176 (VIGGLLLFVAVAYVVELIFSQ), 196-216 (AVFLAAGVLGATIMPHVIYLH), 241-261 (IAMTIAGFVNLAMMATAAAAF), 290-310 (IFGLSLVAAGLSSTVVGTLAG), 329-349 (AVTMLPSFVVILLGLDPTRIL), 350-370 (VMSQVLLSFGIALALVPLLIF), and 392-412 (VIVAIVVSLNGWLIVGSLLGV).

The protein belongs to the NRAMP family.

It is found in the cell inner membrane. Functionally, h(+)-stimulated, divalent metal cation uptake system. The polypeptide is Divalent metal cation transporter MntH (Klebsiella pneumoniae (strain 342)).